The sequence spans 164 residues: Large ribosomal subunit protein uL15 (164 aa).

Positions 1–52 (MSLSKLKAPKGANRERTRVGRGQGSGLGKTAGRGGKGQKARSGNMHFEGFEG) are disordered. The segment covering 21-37 (RGQGSGLGKTAGRGGKG) has biased composition (gly residues).

The protein belongs to the universal ribosomal protein uL15 family. In terms of assembly, part of the 50S ribosomal subunit.

Functionally, binds to the 23S rRNA. This chain is Large ribosomal subunit protein uL15, found in Anaeromyxobacter sp. (strain Fw109-5).